A 106-amino-acid chain; its full sequence is uncharacterized protein (106 aa).

The tract at residues Met-1–Ala-46 is disordered.

This is an uncharacterized protein from Gracula (BFDV).